Reading from the N-terminus, the 201-residue chain is Orotate phosphoribosyltransferase (201 aa).

113–121 (EDIITTGKS) serves as a coordination point for 5-phospho-alpha-D-ribose 1-diphosphate. The orotate site is built by T117 and R145.

This sequence belongs to the purine/pyrimidine phosphoribosyltransferase family. PyrE subfamily. In terms of assembly, homodimer. Requires Mg(2+) as cofactor.

The enzyme catalyses orotidine 5'-phosphate + diphosphate = orotate + 5-phospho-alpha-D-ribose 1-diphosphate. It functions in the pathway pyrimidine metabolism; UMP biosynthesis via de novo pathway; UMP from orotate: step 1/2. Functionally, catalyzes the transfer of a ribosyl phosphate group from 5-phosphoribose 1-diphosphate to orotate, leading to the formation of orotidine monophosphate (OMP). This is Orotate phosphoribosyltransferase from Helicobacter pylori (strain Shi470).